Consider the following 118-residue polypeptide: Large ribosomal subunit protein bL20 (118 aa).

It belongs to the bacterial ribosomal protein bL20 family.

In terms of biological role, binds directly to 23S ribosomal RNA and is necessary for the in vitro assembly process of the 50S ribosomal subunit. It is not involved in the protein synthesizing functions of that subunit. This chain is Large ribosomal subunit protein bL20, found in Buchnera aphidicola subsp. Acyrthosiphon pisum (strain 5A).